Reading from the N-terminus, the 475-residue chain is Tubulin epsilon chain (475 aa).

GTP is bound at residue 148–154 (GGGTGSG).

Belongs to the tubulin family. As to quaternary structure, found in a complex with TEDC1, TEDC2, TUBE1 and TUBD1.

The protein resides in the cytoplasm. The protein localises to the cytoskeleton. Its subcellular location is the microtubule organizing center. It is found in the centrosome. This Mus musculus (Mouse) protein is Tubulin epsilon chain (Tube1).